The following is a 759-amino-acid chain: Subtilisin-like serine-protease S (759 aa).

The signal sequence occupies residues 1 to 22 (MGSAKILSFTLLLFVGYTLVHG). The Inhibitor I9 domain maps to 28–105 (YIVYMGDRSH…SVFESKMNKL (78 aa)). A Peptidase S8 domain is found at 110–613 (SWDFLGLDTV…SGHVNPVASL (504 aa)). Catalysis depends on Asp-139, which acts as the Charge relay system. Asn-170 carries N-linked (GlcNAc...) asparagine glycosylation. His-215 serves as the catalytic Charge relay system. Asn-230 and Asn-388 each carry an N-linked (GlcNAc...) asparagine glycan. One can recognise a PA domain in the interval 390–462 (SFCKEHTLDP…MIGQDAVEEL (73 aa)). Ser-545 functions as the Charge relay system in the catalytic mechanism. N-linked (GlcNAc...) asparagine glycans are attached at residues Asn-593, Asn-642, and Asn-671.

This sequence belongs to the peptidase S8 family.

The protein resides in the secreted. The protein localises to the extracellular space. It is found in the apoplast. Functionally, required for arbuscular mycorrhiza (AM) development during AM symbiosis with AM fungi (e.g. Glomeromycota intraradices). The polypeptide is Subtilisin-like serine-protease S (Lotus japonicus (Lotus corniculatus var. japonicus)).